The chain runs to 798 residues: Ubiquitin carboxyl-terminal hydrolase 10 (798 aa).

Ala2 carries the N-acetylalanine modification. Residues 2–100 form an interaction with p53/TP53 region; it reads ALHSPQYIFG…ILGCTASKIT (99 aa). Residues 6 to 21 are G3BP1-binding; it reads PQYIFGDFSPDEFNQF. Phosphothreonine is present on Thr24. Residue Thr42 is modified to Phosphothreonine; by ATM. Phosphothreonine is present on Thr100. 3 disordered regions span residues 139-166, 194-257, and 307-337; these read GVSGGLGQRERKKKKKRPPGYYSYLKDG, AEFM…CFPA, and TESIDLDPTKPESASPPADGTGSASGTLPVS. Residues 205-219 show a composition bias toward polar residues; sequence TPRTCNSPQNSTDSV. A phosphoserine mark is found at Ser211 and Ser226. Over residues 307–316 the composition is skewed to basic and acidic residues; the sequence is TESIDLDPTK. Position 321 is a phosphoserine (Ser321). Residues 328–337 show a composition bias toward polar residues; the sequence is GSASGTLPVS. The residue at position 337 (Ser337) is a Phosphoserine; by ATM. Phosphoserine is present on residues Ser365 and Ser370. The region spanning 415–795 is the USP domain; sequence RGLINKGNWC…TAYLLYYRRV (381 aa). Catalysis depends on Cys424, which acts as the Nucleophile. Phosphoserine is present on Ser547. Residues 551–562 are compositionally biased toward polar residues; it reads EKLTISNGPKNH. The segment at 551–594 is disordered; sequence EKLTISNGPKNHSVNEEEQEEQGEGSEDEWEQVGPRNKTSVTRQ. Residues Ser563 and Ser576 each carry the phosphoserine modification. The span at 566 to 581 shows a compositional bias: acidic residues; that stretch reads EEEQEEQGEGSEDEWE. The active-site Proton acceptor is the His749.

Belongs to the peptidase C19 family. USP10 subfamily. As to quaternary structure, found in a deubiquitination complex with TANK, USP10 and ZC3H12A; this complex inhibits genotoxic stress- or interleukin-1-beta (IL1B)-mediated NF-kappa-B activation by promoting IKBKG or TRAF6 deubiquitination. Interacts with IKBKG; this interaction increases in response to DNA damage. Interacts with TANK; this interaction increases in response to DNA damage. Interacts with TRAF6; this interaction increases in response to DNA damage. Interacts with ZC3H12A; this interaction increases in response to DNA damage. Interacts with G3BP1 (via NTF2 domain) and G3BP2 (via NTF2 domain); inhibiting stress granule formation. Phosphorylated by ATM following DNA damage, leading to stabilization and translocation it to the nucleus. In terms of processing, ubiquitinated. Deubiquitinated by USP13. In terms of tissue distribution, widely expressed.

The protein localises to the cytoplasm. Its subcellular location is the nucleus. The protein resides in the early endosome. The catalysed reaction is Thiol-dependent hydrolysis of ester, thioester, amide, peptide and isopeptide bonds formed by the C-terminal Gly of ubiquitin (a 76-residue protein attached to proteins as an intracellular targeting signal).. Specifically inhibited by spautin-1 (specific and potent autophagy inhibitor-1), a derivative of MBCQ that binds to USP10 and inhibits deubiquitinase activity. Regulated by PIK3C3/VPS34-containing complexes. Functionally, hydrolase that can remove conjugated ubiquitin from target proteins such as p53/TP53, RPS2/us5, RPS3/us3, RPS10/eS10, BECN1, SNX3 and CFTR. Acts as an essential regulator of p53/TP53 stability: in unstressed cells, specifically deubiquitinates p53/TP53 in the cytoplasm, leading to counteract MDM2 action and stabilize p53/TP53. Following DNA damage, translocates to the nucleus and deubiquitinates p53/TP53, leading to regulate the p53/TP53-dependent DNA damage response. Component of a regulatory loop that controls autophagy and p53/TP53 levels: mediates deubiquitination of BECN1, a key regulator of autophagy, leading to stabilize the PIK3C3/VPS34-containing complexes. In turn, PIK3C3/VPS34-containing complexes regulate USP10 stability, suggesting the existence of a regulatory system by which PIK3C3/VPS34-containing complexes regulate p53/TP53 protein levels via USP10 and USP13. Does not deubiquitinate MDM2. Plays a key role in 40S ribosome subunit recycling when a ribosome has stalled during translation: acts both by inhibiting formation of stress granules, which store stalled translation pre-initiation complexes, and mediating deubiquitination of 40S ribosome subunits. Acts as a negative regulator of stress granules formation by lowering G3BP1 and G3BP2 valence, thereby preventing G3BP1 and G3BP2 ability to undergo liquid-liquid phase separation (LLPS) and assembly of stress granules. Promotes 40S ribosome subunit recycling following ribosome dissociation in response to ribosome stalling by mediating deubiquitination of 40S ribosomal proteins RPS2/us5, RPS3/us3 and RPS10/eS10, thereby preventing their degradation by the proteasome. Part of a ribosome quality control that takes place when ribosomes have stalled during translation initiation (iRQC): USP10 acts by removing monoubiquitination of RPS2/us5 and RPS3/us3, promoting 40S ribosomal subunit recycling. Deubiquitinates CFTR in early endosomes, enhancing its endocytic recycling. Involved in a TANK-dependent negative feedback response to attenuate NF-kappa-B activation via deubiquitinating IKBKG or TRAF6 in response to interleukin-1-beta (IL1B) stimulation or upon DNA damage. Deubiquitinates TBX21 leading to its stabilization. Plays a negative role in the RLR signaling pathway upon RNA virus infection by blocking the RIGI-mediated MAVS activation. Mechanistically, removes the unanchored 'Lys-63'-linked polyubiquitin chains of MAVS to inhibit its aggregation, essential for its activation. This chain is Ubiquitin carboxyl-terminal hydrolase 10, found in Homo sapiens (Human).